Reading from the N-terminus, the 364-residue chain is Triacylglycerol lipase (364 aa).

Residues 1–44 (MARTMRSRVVAGAVACAMSIAPFAGTTAVMTLATTHAAMAATAP) form the signal peptide. One can recognise an AB hydrolase-1 domain in the interval 54–266 (PIILVHGLSG…AIQPTLSVFG (213 aa)). Leucine 61 serves as a coordination point for substrate. The active-site Nucleophile is serine 131. Glutamine 132 serves as a coordination point for substrate. Cysteine 234 and cysteine 314 form a disulfide bridge. Aspartate 286 is a binding site for Ca(2+). Active-site charge relay system residues include aspartate 308 and histidine 330. Positions 332, 336, and 340 each coordinate Ca(2+).

This sequence belongs to the AB hydrolase superfamily. Pseudomonas lipase family. As to quaternary structure, monomer. Ca(2+) serves as cofactor.

The protein resides in the secreted. The catalysed reaction is a triacylglycerol + H2O = a diacylglycerol + a fatty acid + H(+). With respect to regulation, inhibited by RC-(Rp,Sp)- and SC-(Rp,Sp)-1,2-dioctylcarbamoylglycero-3-O-p-nitrophenyl octylphosphonate. Also inhibited by diethyl-p-nitrophenylphosphate (E600). Its function is as follows. Catalyzes the hydrolysis of triacylglycerol. It shows a preference for triacylglycerols with a chain length between 6 and 12 carbons. The sequence is that of Triacylglycerol lipase from Burkholderia cepacia (Pseudomonas cepacia).